A 129-amino-acid polypeptide reads, in one-letter code: MGPRGAPLLVVVLVLGLHALAEGEKPSPCRCSRMTPSNRKNCGFPGITSDQCFNLGCCFDSSVAGVPWCFHPLPNQASEQCVMEVSARENCGYPGISPEDCASRHCCFSNLIFEVPWCFFPQSVDDCHY.

Residues 1 to 23 (MGPRGAPLLVVVLVLGLHALAEG) form the signal peptide. P-type domains are found at residues 29-73 (CRCS…FHPL) and 79-122 (EQCV…FFPQ). Intrachain disulfides connect Cys29–Cys127, Cys31–Cys58, Cys42–Cys57, Cys52–Cys69, Cys81–Cys107, Cys91–Cys106, and Cys101–Cys118.

Expressed in the digestive tract, where it was found predominantly in the stomach with highest expression in the antrum. It is secreted predominantly from antral mucous cells into the lumen of the gastrointestinal tract.

It is found in the secreted. Functionally, inhibits gastrointestinal motility and gastric acid secretion. Could function as a structural component of gastric mucus, possibly by stabilizing glycoproteins in the mucus gel through interactions with carbohydrate side chains. The polypeptide is Trefoil factor 2 (Tff2) (Rattus norvegicus (Rat)).